Here is a 562-residue protein sequence, read N- to C-terminus: Calmodulin-binding protein 60 F (562 aa).

The segment at 1–22 is disordered; sequence MENSMNNRGHGHNQEHADNLPE. The tract at residues 5-84 is calmodulin-binding; sequence MNNRGHGHNQ…STSRSTEPNK (80 aa). Residues 12–22 show a composition bias toward basic and acidic residues; that stretch reads HNQEHADNLPE. The DNA-binding stretch occupies residues 154 to 273; the sequence is EDDKDWTREH…ALHKKLLKSN (120 aa).

Belongs to the plant ACBP60 protein family. Interacts with calmodulin (CaM).

It is found in the nucleus. Transcription activator that binds DNA in a sequence-specific manner, likely 5'-GAAATTTTGG-3', to promote the expression of target genes. The chain is Calmodulin-binding protein 60 F from Arabidopsis thaliana (Mouse-ear cress).